The primary structure comprises 532 residues: Amidophosphoribosyltransferase 3, chloroplastic (532 aa).

A chloroplast-targeting transit peptide spans 1 to 59 (MAFSVEEISSILPNSLSANPRNVSQNTISPSFFKPSLKPYASKTLISLSCRRSLSPVFS). Residue Cys77 is the Nucleophile of the active site. Positions 77–296 (CGVVGIHGDP…PGEIVVVDRN (220 aa)) constitute a Glutamine amidotransferase type-2 domain. [4Fe-4S] cluster contacts are provided by Cys313, Cys459, Cys511, and Cys514.

It in the C-terminal section; belongs to the purine/pyrimidine phosphoribosyltransferase family. It depends on [4Fe-4S] cluster as a cofactor. Requires Mg(2+) as cofactor. As to expression, mostly expressed at low levels in leaves, and, to a lower extent, in cotyledons.

It is found in the plastid. The protein localises to the chloroplast stroma. The catalysed reaction is 5-phospho-beta-D-ribosylamine + L-glutamate + diphosphate = 5-phospho-alpha-D-ribose 1-diphosphate + L-glutamine + H2O. The protein operates within purine metabolism; IMP biosynthesis via de novo pathway; N(1)-(5-phospho-D-ribosyl)glycinamide from 5-phospho-alpha-D-ribose 1-diphosphate: step 1/2. Its activity is regulated as follows. Inhibited by the phenyltriazole acetic acid compound [5-(4-chlorophenyl)-1-isopropyl-1H-[1,2,4]triazol-3-yl]-acetic acid (DAS734), a bleaching herbicide. Repressed by AMP, ADP, ATP and GTP, and slightly by GMP. Catalyzes the first committed step of 'de novo' purine biosynthesis from glutamine. The sequence is that of Amidophosphoribosyltransferase 3, chloroplastic (ASE3) from Arabidopsis thaliana (Mouse-ear cress).